We begin with the raw amino-acid sequence, 315 residues long: MSGPNIVHSGYGLRCEKLDKPLNLGWGLDNSAVLHWPGELPTGWLCDALDQIFIAAPQLSAVVLPWSEWCEEPQALTLFGQVQSDIIHRSAFWQLPLWLSSPANRASGEMVFDAEREIYFPQRPPRPQGEVYRRYDPRIRRMLSFRIADPVSDAERFTRWMNDPRVEYFWEQSGSLEVQIAYLERQLTSKHAFPLIGCFDDRPVSNIEIYWAAEDRIGRHYSWQPFDRGLHLLVGEQQWRGAHYVQSWLRGVTHYLLLNEPRTQRTVLEPRTDNQRLFRHLEPAGYRTIKEFDFPHKRSRMVMADRHHFFTEVGL.

The protein belongs to the IucB family.

The protein resides in the cytoplasm. The protein localises to the cell membrane. The catalysed reaction is N(6)-hydroxy-L-lysine + acetyl-CoA = N(6)-acetyl-N(6)-hydroxy-L-lysine + CoA. It functions in the pathway siderophore biosynthesis; aerobactin biosynthesis. Its function is as follows. Catalyzes the transfer of acetyl from acetyl-CoA to the N-hydroxylysine. Involved in the biosynthesis of the siderophore aerobactin which is a chelator that mediates the high-affinity iron transport systems induced under iron-stressed conditions. The sequence is that of N(6)-hydroxylysine O-acetyltransferase (iucB) from Escherichia coli.